We begin with the raw amino-acid sequence, 403 residues long: Interferon-induced protein with tetratricopeptide repeats 3 (403 aa).

TPR repeat units follow at residues 94 to 127 (LVTWGNYAWIYYHMGRLSEAQAYVDKVRQVCQKF), 136 to 169 (PELECEEGWTRLKCGRNERAKMCFEKALEEKPKD), 172 to 206 (CSSGMAIAMFRLEEKPEKQFSVDALKQAMELNPQN), and 241 to 274 (TDVLQKAAQFYKKKGNLDRAIELLGKALRSTVNN).

The protein belongs to the IFIT family. As to quaternary structure, component of an interferon-dependent multiprotein complex, at least composed of IFIT1, IFIT2 and IFIT3. Interacts with IFIT1 and IFIT2. Interacts (via N-terminus) with MAVS, TBK1, TRAF6 and RIGI. Interacts with COPS5.

Its subcellular location is the cytoplasm. It is found in the mitochondrion. Its function is as follows. IFN-induced antiviral protein which acts as an inhibitor of cellular as well as viral processes, cell migration, proliferation, signaling, and viral replication. Enhances MAVS-mediated host antiviral responses by serving as an adapter bridging TBK1 to MAVS which leads to the activation of TBK1 and phosphorylation of IRF3 and phosphorylated IRF3 translocates into nucleus to promote antiviral gene transcription. Exhibits an antiproliferative activity via the up-regulation of cell cycle negative regulators CDKN1A/p21 and CDKN1B/p27. Normally, CDKN1B/p27 turnover is regulated by COPS5, which binds CDKN1B/p27 in the nucleus and exports it to the cytoplasm for ubiquitin-dependent degradation. IFIT3 sequesters COPS5 in the cytoplasm, thereby increasing nuclear CDKN1B/p27 protein levels. Up-regulates CDKN1A/p21 by down-regulating MYC, a repressor of CDKN1A/p21. Can negatively regulate the apoptotic effects of IFIT2. This chain is Interferon-induced protein with tetratricopeptide repeats 3 (Ifit3), found in Mus musculus (Mouse).